The primary structure comprises 218 residues: DNA replication complex GINS protein psf3 (218 aa).

The span at 147 to 163 (GGGSSYHGRDGGGAGGK) shows a compositional bias: gly residues. The interval 147–182 (GGGSSYHGRDGGGAGGKGKGKATKDDNASNLGVGGA) is disordered.

This sequence belongs to the GINS3/PSF3 family. In terms of assembly, component of the GINS complex which is a heterotetramer of div-26/sld5, drc-1/psf1, drc-2/psf2 and drc-3/psf3.

It localises to the nucleus. Its function is as follows. The GINS complex plays an essential role in the initiation of DNA replication. The protein is DNA replication complex GINS protein psf3 (drc-3) of Neurospora crassa (strain ATCC 24698 / 74-OR23-1A / CBS 708.71 / DSM 1257 / FGSC 987).